The primary structure comprises 388 residues: Chalcone synthase D (388 aa).

The active site involves Cys164.

It belongs to the thiolase-like superfamily. Chalcone/stilbene synthases family.

It carries out the reaction (E)-4-coumaroyl-CoA + 3 malonyl-CoA + 3 H(+) = 2',4,4',6'-tetrahydroxychalcone + 3 CO2 + 4 CoA. It functions in the pathway secondary metabolite biosynthesis; flavonoid biosynthesis. Functionally, the primary product of this enzyme is 4,2',4',6'-tetrahydroxychalcone (also termed naringenin-chalcone or chalcone) which can under specific conditions spontaneously isomerize into naringenin. This Ipomoea nil (Japanese morning glory) protein is Chalcone synthase D (CHSD).